The sequence spans 419 residues: Peroxisome biogenesis factor 10 (419 aa).

Over 1–27 (MPPSEEIKLRAVSPRPDFKANYLEFAN) the chain is Peroxisomal matrix. The helical transmembrane segment at 28 to 57 (APAIVRANQKDSYFETVLRDKLQNVIQIFK) threads the bilayer. Position 58 (G58) is a topological domain, cytoplasmic. A helical membrane pass occupies residues 59-80 (QRFTHTHPEEIGVAAKALYLSL). Topologically, residues 81–108 (TTLLGTKTLGEEYVDLIYVSRDGKRIPR) are peroxisomal matrix. A helical membrane pass occupies residues 109–141 (YLARAGFIFAYAILPYFLTRLFRRLKSSSTPKD). The Cytoplasmic segment spans residues 142-158 (EVTEEKINKELPISLRI). Residues 159–185 (EKYLSNMSYSKVLDTIMNLHIAVFYFS) form a helical membrane-spanning segment. Topologically, residues 186–215 (GQFYNISKRFFSMRYAFGHKINKERTPNGN) are peroxisomal matrix. The chain crosses the membrane as a helical span at residues 216–235 (YELLGGLIVLQLVMKSLGGF). At 236–419 (KGLIGSFTGN…RTLGYFLVVF (184 aa)) the chain is on the cytoplasmic side. Zn(2+) is bound by residues C298, C301, C313, H315, C318, C321, C334, and C347. Residues 298–360 (CMLCLSYMTN…FYIPTLNKIC (63 aa)) form an RING-type zinc finger.

Belongs to the pex2/pex10/pex12 family. As to quaternary structure, component of the peroxisomal translocation complex, composed of at least PEX3, PEX2, PEX10 and PEX12. Interacts with PEX19.

It localises to the peroxisome membrane. It catalyses the reaction S-ubiquitinyl-[E2 ubiquitin-conjugating enzyme]-L-cysteine + [acceptor protein]-L-lysine = [E2 ubiquitin-conjugating enzyme]-L-cysteine + N(6)-ubiquitinyl-[acceptor protein]-L-lysine.. It functions in the pathway protein modification; protein ubiquitination. With respect to regulation, the E3 ubiquitin-protein ligase activity is stimulated by PEX12. E3 ubiquitin-protein ligase component of the peroxisomal translocation complex. The two types of peroxisomal matrix targeting signals, PTS1 and PTS2, are first recognized in the cytosol by their receptors PEX5 and PEX7, respectively, which then carry the cargo to the peroxisomal membrane. The peroxisomal targeting signal (PTS) receptor-cargo complexes interact with peroxisomal membrane protein (PMP) components of the docking complex. They have then additional downstream interactions with the translocation complex, leading to the transport of fully folded and oligomerized cargo into the peroxisome matrix. The peroxisomal translocation complex forms the retrotranslocation channel with each subunit contributing transmembrane segments that coassemble into an open channel that specifically allows the passage of PEX5 and PEX20 through the peroxisomal membrane. Specifically catalyzes monoubiquitination of PEX5 and/or PEX20 at 'Cys-6' and 'Cys-8', respectively, a modification that acts as a signal for PEX5 or PEX20 export from peroxisomes to the cytosol, thereby promoting PEX5 and PEX20 recycling. The chain is Peroxisome biogenesis factor 10 from Komagataella pastoris (Yeast).